A 224-amino-acid polypeptide reads, in one-letter code: Germin-like protein 8-11 (224 aa).

The N-terminal stretch at 1-22 is a signal peptide; sequence MASSSFLLLATLLAMASWQGMA. A disulfide bridge connects residues Cys-32 and Cys-47. The Cupin type-1 domain occupies 62–212; that stretch reads AMLDTPRKTN…AFQVEKGTID (151 aa). Residue Asn-76 is glycosylated (N-linked (GlcNAc...) asparagine). His-109, His-111, Glu-116, and His-157 together coordinate Mn(2+).

Belongs to the germin family. As to quaternary structure, oligomer (believed to be a pentamer but probably hexamer).

It localises to the secreted. The protein localises to the extracellular space. The protein resides in the apoplast. Its function is as follows. Plays a role in broad-spectrum disease resistance. Probably has no oxalate oxidase activity even if the active site is conserved. The chain is Germin-like protein 8-11 from Oryza sativa subsp. japonica (Rice).